Here is a 95-residue protein sequence, read N- to C-terminus: Small ribosomal subunit protein bS16 (95 aa).

This sequence belongs to the bacterial ribosomal protein bS16 family.

The sequence is that of Small ribosomal subunit protein bS16 from Mycoplasma genitalium (strain ATCC 33530 / DSM 19775 / NCTC 10195 / G37) (Mycoplasmoides genitalium).